The following is an 842-amino-acid chain: Probable vinculin (842 aa).

Residues Lys-585–Ala-679 are a coiled coil.

The protein belongs to the vinculin/alpha-catenin family. In terms of assembly, monomer. Associates with F-actin. Interacts with aarA, ctxA, ctxB and rgaA. As to expression, epithelium.

Its subcellular location is the cytoplasm. It localises to the cell cortex. The protein resides in the cell junction. In terms of biological role, involved in cell adhesion. Thought to play an important role in cytokinesis B, probably by providing substrate adhesion and traction forces. Required to organize and polarize the tip epithelium during cytokinesis. Required for the normal distribution of myosin in the tip epithelium. Involved in the localization of ctxA, ctxB, dcsA, exoc6 and rgaA. Thought to form a complex with ctxA, ctxB, and rgaA which regulates myosin accumulation to the apical plasma membrane. The protein is Probable vinculin (ctnnA) of Dictyostelium discoideum (Social amoeba).